Reading from the N-terminus, the 215-residue chain is Large ribosomal subunit protein bL25 (215 aa).

The segment covering 1-10 (MAKSASNQLR) has biased composition (polar residues). 2 disordered regions span residues 1–25 (MAKSASNQLRVTVRTETGKGASRRA) and 187–215 (ELEGEVAGAEEAEEAAVEAGEAEAAGESE).

This sequence belongs to the bacterial ribosomal protein bL25 family. CTC subfamily. Part of the 50S ribosomal subunit; part of the 5S rRNA/L5/L18/L25 subcomplex. Contacts the 5S rRNA. Binds to the 5S rRNA independently of L5 and L18.

This is one of the proteins that binds to the 5S RNA in the ribosome where it forms part of the central protuberance. This chain is Large ribosomal subunit protein bL25, found in Mycobacterium bovis (strain ATCC BAA-935 / AF2122/97).